The primary structure comprises 900 residues: Isoleucine--tRNA ligase (900 aa).

The 'HIGH' region signature appears at 59-69 (PYANGNIHMGH). Residue Glu-550 participates in L-isoleucyl-5'-AMP binding. Residues 591 to 595 (KMSKS) carry the 'KMSKS' region motif. An ATP-binding site is contributed by Lys-594. 4 residues coordinate Zn(2+): Cys-876, Cys-879, Cys-892, and Cys-895.

This sequence belongs to the class-I aminoacyl-tRNA synthetase family. IleS type 1 subfamily. As to quaternary structure, monomer. Zn(2+) serves as cofactor.

The protein resides in the cytoplasm. It catalyses the reaction tRNA(Ile) + L-isoleucine + ATP = L-isoleucyl-tRNA(Ile) + AMP + diphosphate. Functionally, catalyzes the attachment of isoleucine to tRNA(Ile). As IleRS can inadvertently accommodate and process structurally similar amino acids such as valine, to avoid such errors it has two additional distinct tRNA(Ile)-dependent editing activities. One activity is designated as 'pretransfer' editing and involves the hydrolysis of activated Val-AMP. The other activity is designated 'posttransfer' editing and involves deacylation of mischarged Val-tRNA(Ile). The sequence is that of Isoleucine--tRNA ligase from Onion yellows phytoplasma (strain OY-M).